Consider the following 234-residue polypeptide: MGEKEEVKLLGVWYSPYAIRPKIALRLKSVDYDYVEENLFGSKSELLLKSNPVHKKVPVLLHNNKPIVESLNIVEYIDETWNSSAPSILPSHPYDRALARFWSDFVDNKWFPALRMAAITKSEDAKAKAMEEVEEGLLQLEDAFVSISKGKPFFGGEAIGFMDICFGSFVVLLKAREKFKAEKLLDESKTPSLCKWADRFLSDETVKNVAPEIEKVAEFLQELEVRAQSAASRS.

Positions 5–85 (EEVKLLGVWY…YIDETWNSSA (81 aa)) constitute a GST N-terminal domain. Residues 15 to 16 (SP), 42 to 43 (SK), 56 to 57 (KV), and 69 to 70 (ES) contribute to the glutathione site. Positions 92–219 (HPYDRALARF…APEIEKVAEF (128 aa)) constitute a GST C-terminal domain.

Belongs to the GST superfamily. Tau family.

It is found in the cytoplasm. The protein resides in the cytosol. It catalyses the reaction RX + glutathione = an S-substituted glutathione + a halide anion + H(+). Functionally, may be involved in the conjugation of reduced glutathione to a wide number of exogenous and endogenous hydrophobic electrophiles and have a detoxification role against certain herbicides. The chain is Glutathione S-transferase U16 (GSTU16) from Arabidopsis thaliana (Mouse-ear cress).